The chain runs to 593 residues: F-box/LRR-repeat protein 17 (593 aa).

The 58-residue stretch at 120–177 (DLDLQLDTDIVQPGRFHAVGLWEVLKRLPPSSLLMAARVCKGWRETSRKMWKAAEELR) folds into the F-box domain. LRR repeat units follow at residues 178-206 (IRVP…SLKI), 207-232 (ESDF…EITT), 237-262 (VNRI…KMEG), 276-304 (LSTL…SLEF), 335-361 (SLKL…SLVL), 362-387 (GINI…DLSG), 414-439 (CPNI…DCGM), 477-502 (LSLW…NLNL), and 503-525 (CSNL…YASG).

Part of a SCF (ASK-cullin-F-box) protein ligase complex. Interacts with SKP1A/ASK1, KRP4, KRP6 and KRP7. In terms of tissue distribution, expressed in developing pollen.

The protein resides in the nucleus. It participates in protein modification; protein ubiquitination. Its function is as follows. Essential protein for male fertility. Component of the SCF(ASK-cullin-F-box) E3 ubiquitin ligase complex SCF(FBL17), which mediates the ubiquitination and subsequent proteasomal degradation of target proteins. Enables the switch in cell cycle control leading to male germ cell lineage formation from microspores after meiosis. Targets CDKA-1 inhibitors the degradation specifically in male germ cells (e.g. KRP6 and KRP7) and thus enables CDKA-1 activation and germ cell S-phase progression. Promotes twin sperm cell production and double fertilization. This chain is F-box/LRR-repeat protein 17 (FBL17), found in Arabidopsis thaliana (Mouse-ear cress).